Here is a 287-residue protein sequence, read N- to C-terminus: Acetyl-coenzyme A carboxylase carboxyl transferase subunit beta (287 aa).

One can recognise a CoA carboxyltransferase N-terminal domain in the interval 36 to 287; sequence MWVKCDRCGK…KVLYKILELH (252 aa). Positions 40, 43, 59, and 62 each coordinate Zn(2+). The C4-type zinc-finger motif lies at 40-62; the sequence is CDRCGKTLYKKDLDENLKVCKFC.

The protein belongs to the AccD/PCCB family. In terms of assembly, acetyl-CoA carboxylase is a heterohexamer composed of biotin carboxyl carrier protein (AccB), biotin carboxylase (AccC) and two subunits each of ACCase subunit alpha (AccA) and ACCase subunit beta (AccD). Requires Zn(2+) as cofactor.

The protein resides in the cytoplasm. It carries out the reaction N(6)-carboxybiotinyl-L-lysyl-[protein] + acetyl-CoA = N(6)-biotinyl-L-lysyl-[protein] + malonyl-CoA. The protein operates within lipid metabolism; malonyl-CoA biosynthesis; malonyl-CoA from acetyl-CoA: step 1/1. In terms of biological role, component of the acetyl coenzyme A carboxylase (ACC) complex. Biotin carboxylase (BC) catalyzes the carboxylation of biotin on its carrier protein (BCCP) and then the CO(2) group is transferred by the transcarboxylase to acetyl-CoA to form malonyl-CoA. This Clostridium novyi (strain NT) protein is Acetyl-coenzyme A carboxylase carboxyl transferase subunit beta.